The sequence spans 409 residues: Tryptophan synthase beta chain (409 aa).

Residue K100 is modified to N6-(pyridoxal phosphate)lysine.

The protein belongs to the TrpB family. In terms of assembly, tetramer of two alpha and two beta chains. Pyridoxal 5'-phosphate serves as cofactor.

The enzyme catalyses (1S,2R)-1-C-(indol-3-yl)glycerol 3-phosphate + L-serine = D-glyceraldehyde 3-phosphate + L-tryptophan + H2O. The protein operates within amino-acid biosynthesis; L-tryptophan biosynthesis; L-tryptophan from chorismate: step 5/5. Its function is as follows. The beta subunit is responsible for the synthesis of L-tryptophan from indole and L-serine. This Pyrobaculum arsenaticum (strain DSM 13514 / JCM 11321 / PZ6) protein is Tryptophan synthase beta chain.